Here is a 313-residue protein sequence, read N- to C-terminus: Potassium channel subfamily K member 6 (313 aa).

The Cytoplasmic portion of the chain corresponds to 1–4 (MRRG). Residues 5–25 (ALLAGALAAYAAYLVLGALLV) form a helical membrane-spanning segment. 2 N-linked (GlcNAc...) asparagine glycosylation sites follow: Asn79 and Asn85. Positions 90 to 115 (AWDFASALFFASTLITTVGYGYTTPL) form an intramembrane region, pore-forming. Residues Thr106, Val107, Gly108, and Tyr109 each coordinate K(+). The segment at 106–111 (TVGYGY) is selectivity filter 1. A helical transmembrane segment spans residues 121–141 (AFSIAFALLGVPTTMLLLTAS). Residues 142-172 (AQRLSLLLTHVPLSWLSMRWGWDPRRAACWH) are Cytoplasmic-facing. Residues 173–193 (LVALLGVVVTVCFLVPAVIFA) form a helical membrane-spanning segment. Positions 199 to 223 (WSFLDAFYFCFISLSTIGLGDYVPG) form an intramembrane region, pore-forming. The K(+) site is built by Thr214, Ile215, and Gly216. The interval 214 to 219 (TIGLGD) is selectivity filter 2. The chain crosses the membrane as a helical span at residues 236-256 (VLVTVYLFLGLVAMVLVLQTF). At 257–313 (RHVSDLHGLTELILLPPPCPASFNADEDDRVDILGPQPESHQQLSASSHTDYASIPR) the chain is on the cytoplasmic side. A Lysosomal targeting signal motif is present at residues 282-290 (DEDDRVDIL). Positions 288–313 (DILGPQPESHQQLSASSHTDYASIPR) are disordered. Positions 295–307 (ESHQQLSASSHTD) are enriched in polar residues. Residues 308–312 (YASIP) carry the Lysosomal targeting signal motif.

Belongs to the two pore domain potassium channel (TC 1.A.1.8) family. Homodimer; disulfide-linked. In terms of processing, N-glycosylation is necessary for targeting to lysosomes. As to expression, widespread expression, detected in all tissues tested except for skeletal muscle. Strongest expression in placenta, pancreas, heart, colon and spleen, lower levels detected in peripheral blood leukocytes, lung, liver, kidney and thymus. Lowest expression detected in brain.

The protein resides in the late endosome membrane. It localises to the lysosome membrane. The enzyme catalyses K(+)(in) = K(+)(out). Its function is as follows. K(+) channel that conducts outward rectifying currents at the membranes of the endolysosomal system. Active in lysosomes where it regulates lysosome numbers and size. In macrophages, enables K(+) efflux coupled to ATP-induced NLRP3 inflammasome activation upon bacterial infection. Cooperates with ATP-gated P2RX7 channels to activate NLRP3 inflammasome, with P2RX7 conducting Ca(2+) and Na(+) influx that sets the membrane potential for K(+) efflux. Functionally, does not display channel activity. The protein is Potassium channel subfamily K member 6 of Homo sapiens (Human).